Consider the following 90-residue polypeptide: Protein A54 (90 aa).

The polypeptide is Protein A54 (Homo sapiens (Human)).